We begin with the raw amino-acid sequence, 787 residues long: ABC transporter G family member 5 (787 aa).

Residues 1–17 (MSRFVDKLPLFDRRPSP) show a composition bias toward basic and acidic residues. 2 disordered regions span residues 1-25 (MSRFVDKLPLFDRRPSPMEEAEGLP) and 71-116 (NDAR…EGQP). Residues 74-85 (RSGSSTPISSPR) show a composition bias toward polar residues. Residues 121–382 (LKFTDLTYSV…FLDFGKPIPD (262 aa)) enclose the ABC transporter domain. 175 to 182 (GASGSGKS) provides a ligand contact to ATP. The ABC transmembrane type-2 domain occupies 484–691 (GVLTRRAFIN…PYEAVMQNEF (208 aa)). 8 helical membrane-spanning segments follow: residues 500-520 (VFIIRLAAVLVTGFILATIFW), 535-555 (FFAIAMSTMYYTCSDALPVFL), 576-596 (VLSHTIVGFPSLVVLSFAFAL), 599-619 (FFSVGLAGGVNGFFYFVAIVL), 620-640 (ASFWAGSGFATFLSGVVTHVM), 641-661 (LGFPVVLSTLAYFLLFSGFFI), 728-745 (SLGVNIGTGTCITTGPDF), and 760-780 (LWITVAWGFLFRILFYISLLL).

It belongs to the ABC transporter superfamily. ABCG family. Eye pigment precursor importer (TC 3.A.1.204) subfamily. In terms of tissue distribution, expressed in the crown root primordia, endodermis, pericycle and stele in the root, in leaf primordia of main and axillary shoots, and in the vascular cells and leaf epidermis of older leaves.

Its subcellular location is the cell membrane. Essential transporter for growth and development under abiotic stress. Mediates shoot branching by promoting the outgrowth of lateral shoots. Required for salt tolerance via Na/K homeostasis, at least partly by regulating SKC1/OsHKT1;5. Necessary for hypodermal suberization of roots, which contributes to formation of the apoplastic barrier. The sequence is that of ABC transporter G family member 5 from Oryza sativa subsp. japonica (Rice).